A 215-amino-acid chain; its full sequence is Chaperone protein TorD (215 aa).

Belongs to the TorD/DmsD family. TorD subfamily.

The protein localises to the cytoplasm. In terms of biological role, involved in the biogenesis of TorA. Acts on TorA before the insertion of the molybdenum cofactor and, as a result, probably favors a conformation of the apoenzyme that is competent for acquiring the cofactor. The protein is Chaperone protein TorD of Vibrio parahaemolyticus serotype O3:K6 (strain RIMD 2210633).